Reading from the N-terminus, the 256-residue chain is MQWQDQAIILGVKRHGETSVIAEVMTRGRGRHLGLVRSGRSRAMRPVLQPGNAVEVVWRARLDEHLGEFRVEPVTLRAARLMDTATAVYGVQAMGALLRLLPERDPHPHLFDALEVILDHLHNPADAGELFVRFELAVLNDLGFGLDLAECAATGARSDLAYVSPKSGRAVSRSAGAPWADKMLLLPPFLGVEGNHAADVDSLAAAFRLTGFFLHRHVYEPRGIEAVAARDGFVQAALKALNPASQTLSSPNGVSA.

Belongs to the RecO family.

In terms of biological role, involved in DNA repair and RecF pathway recombination. The polypeptide is DNA repair protein RecO (Rhizobium etli (strain ATCC 51251 / DSM 11541 / JCM 21823 / NBRC 15573 / CFN 42)).